Consider the following 63-residue polypeptide: Large ribosomal subunit protein uL30 (63 aa).

It belongs to the universal ribosomal protein uL30 family. As to quaternary structure, part of the 50S ribosomal subunit.

This chain is Large ribosomal subunit protein uL30, found in Bradyrhizobium sp. (strain BTAi1 / ATCC BAA-1182).